Here is a 661-residue protein sequence, read N- to C-terminus: UvrABC system protein B (661 aa).

One can recognise a Helicase ATP-binding domain in the interval 25 to 178 (EGILKGEKFQ…DEVIRDLIRM (154 aa)). 38–45 (GVTGSGKT) provides a ligand contact to ATP. Positions 91–114 (YYDYYQPEAYIPETDTYIEKDSSI) match the Beta-hairpin motif. The Helicase C-terminal domain occupies 429–591 (QIDHLIGEIR…IVPQTVRKGI (163 aa)). Positions 625 to 660 (EEYIKELEQEMKKLAIELEFEKAAKVRDKIFELKKL) constitute a UVR domain.

This sequence belongs to the UvrB family. In terms of assembly, forms a heterotetramer with UvrA during the search for lesions. Interacts with UvrC in an incision complex.

The protein resides in the cytoplasm. The UvrABC repair system catalyzes the recognition and processing of DNA lesions. A damage recognition complex composed of 2 UvrA and 2 UvrB subunits scans DNA for abnormalities. Upon binding of the UvrA(2)B(2) complex to a putative damaged site, the DNA wraps around one UvrB monomer. DNA wrap is dependent on ATP binding by UvrB and probably causes local melting of the DNA helix, facilitating insertion of UvrB beta-hairpin between the DNA strands. Then UvrB probes one DNA strand for the presence of a lesion. If a lesion is found the UvrA subunits dissociate and the UvrB-DNA preincision complex is formed. This complex is subsequently bound by UvrC and the second UvrB is released. If no lesion is found, the DNA wraps around the other UvrB subunit that will check the other stand for damage. The chain is UvrABC system protein B from Caldicellulosiruptor bescii (strain ATCC BAA-1888 / DSM 6725 / KCTC 15123 / Z-1320) (Anaerocellum thermophilum).